Here is a 336-residue protein sequence, read N- to C-terminus: Galactose/methyl galactoside import permease protein MglC (336 aa).

8 helical membrane passes run 17–37 (AIYF…PTFL), 53–73 (LIIA…LSAG), 107–127 (VVIL…GLVI), 128–148 (AYLN…IYGF), 181–201 (FKLS…WIMW), 231–251 (LVAI…LEAG), 257–277 (TNNL…VGGV), and 306–326 (IGVN…LAVA).

It belongs to the binding-protein-dependent transport system permease family. AraH/RbsC subfamily. In terms of assembly, the complex is composed of one ATP-binding protein (MglA), two transmembrane proteins (MglC) and a solute-binding protein (MglB).

It localises to the cell inner membrane. Functionally, part of the ABC transporter complex MglABC involved in galactose/methyl galactoside import. Probably responsible for the translocation of the substrate across the membrane. The protein is Galactose/methyl galactoside import permease protein MglC (mglC) of Haemophilus influenzae (strain ATCC 51907 / DSM 11121 / KW20 / Rd).